The sequence spans 633 residues: Extracellular metalloproteinase 3 (633 aa).

The signal sequence occupies residues 1-18; that stretch reads MHGLLLAGLLALPMNVLA. A propeptide spanning residues 19–246 is cleaved from the precursor; it reads HPAEHHASNV…VHNVVDYVAS (228 aa). Residues asparagine 232 and asparagine 410 are each glycosylated (N-linked (GlcNAc...) asparagine). Histidine 429 is a binding site for Zn(2+). The active site involves glutamate 430. Histidine 433 is a Zn(2+) binding site. N-linked (GlcNAc...) asparagine glycosylation is found at asparagine 480 and asparagine 622.

It belongs to the peptidase M36 family. Zn(2+) serves as cofactor.

The protein resides in the secreted. Secreted metalloproteinase that allows assimilation of proteinaceous substrates and probably acts as a virulence factor. This Arthroderma gypseum (strain ATCC MYA-4604 / CBS 118893) (Microsporum gypseum) protein is Extracellular metalloproteinase 3 (MEP3).